The primary structure comprises 271 residues: tRNA (guanine-N(1)-)-methyltransferase (271 aa).

S-adenosyl-L-methionine contacts are provided by residues Gly-120 and 145–150; that span reads IGDYVL.

Belongs to the RNA methyltransferase TrmD family. As to quaternary structure, homodimer.

The protein localises to the cytoplasm. The enzyme catalyses guanosine(37) in tRNA + S-adenosyl-L-methionine = N(1)-methylguanosine(37) in tRNA + S-adenosyl-L-homocysteine + H(+). In terms of biological role, specifically methylates guanosine-37 in various tRNAs. This is tRNA (guanine-N(1)-)-methyltransferase from Bifidobacterium longum subsp. infantis (strain ATCC 15697 / DSM 20088 / JCM 1222 / NCTC 11817 / S12).